A 143-amino-acid chain; its full sequence is MSFTTCILVMIGGALGTLARYVVSVLSLPISRDLPWGTILINVTGSFIIGLFGTLTLAQGRFPVSENVRLFVMIGLCGGYTTFSSFSLQTLDLMRNGAVVRAMVNVCASVVLCVLAVALGHVVAAHWNGGAVQIAQVSIEEDG.

The next 4 helical transmembrane spans lie at 6 to 26 (CILV…VSVL), 38 to 58 (TILI…LTLA), 70 to 90 (LFVM…SLQT), and 103 to 123 (MVNV…GHVV). Residues Gly78 and Thr81 each coordinate Na(+).

Belongs to the fluoride channel Fluc/FEX (TC 1.A.43) family.

Its subcellular location is the cell inner membrane. The catalysed reaction is fluoride(in) = fluoride(out). With respect to regulation, na(+) is not transported, but it plays an essential structural role and its presence is essential for fluoride channel function. Functionally, fluoride-specific ion channel. Important for reducing fluoride concentration in the cell, thus reducing its toxicity. The sequence is that of Fluoride-specific ion channel FluC from Methylobacterium radiotolerans (strain ATCC 27329 / DSM 1819 / JCM 2831 / NBRC 15690 / NCIMB 10815 / 0-1).